The sequence spans 119 residues: Flagellar transcriptional regulator FlhD (119 aa).

This sequence belongs to the FlhD family. In terms of assembly, homodimer; disulfide-linked. Forms a heterohexamer composed of two FlhC and four FlhD subunits. Each FlhC binds a FlhD dimer, forming a heterotrimer, and a hexamer assembles by dimerization of two heterotrimers.

Its subcellular location is the cytoplasm. Functions in complex with FlhC as a master transcriptional regulator that regulates transcription of several flagellar and non-flagellar operons by binding to their promoter region. Activates expression of class 2 flagellar genes, including fliA, which is a flagellum-specific sigma factor that turns on the class 3 genes. Also regulates genes whose products function in a variety of physiological pathways. This is Flagellar transcriptional regulator FlhD from Serratia marcescens.